We begin with the raw amino-acid sequence, 254 residues long: Acetyl-coenzyme A carboxylase carboxyl transferase subunit beta (254 aa).

The CoA carboxyltransferase N-terminal domain maps to 1-254; it reads MWLRCPHCHQ…LLKTGSVANE (254 aa). Positions 5, 8, 23, and 26 each coordinate Zn(2+). A C4-type zinc finger spans residues 5–26; the sequence is CPHCHQLLFAKQLTQYAVCPNC.

This sequence belongs to the AccD/PCCB family. Acetyl-CoA carboxylase is a heterohexamer composed of biotin carboxyl carrier protein (AccB), biotin carboxylase (AccC) and two subunits each of ACCase subunit alpha (AccA) and ACCase subunit beta (AccD). The cofactor is Zn(2+).

It is found in the cytoplasm. It carries out the reaction N(6)-carboxybiotinyl-L-lysyl-[protein] + acetyl-CoA = N(6)-biotinyl-L-lysyl-[protein] + malonyl-CoA. The protein operates within lipid metabolism; malonyl-CoA biosynthesis; malonyl-CoA from acetyl-CoA: step 1/1. Its function is as follows. Component of the acetyl coenzyme A carboxylase (ACC) complex. Biotin carboxylase (BC) catalyzes the carboxylation of biotin on its carrier protein (BCCP) and then the CO(2) group is transferred by the transcarboxylase to acetyl-CoA to form malonyl-CoA. The chain is Acetyl-coenzyme A carboxylase carboxyl transferase subunit beta from Limosilactobacillus reuteri (strain DSM 20016) (Lactobacillus reuteri).